Consider the following 909-residue polypeptide: Glucan endo-1,3-beta-D-glucosidase ARB_01444 (909 aa).

Positions 1–23 are cleaved as a signal peptide; the sequence is MKPYTTLPGVAVLVSLLTQSAHA. The segment at 136–187 is disordered; sequence KRSPAPQRHPPAPTKATAGYQFTNCTSTSNPGPTATSPTSGIPSQPSAPPAT. Over residues 155–180 the composition is skewed to polar residues; that stretch reads YQFTNCTSTSNPGPTATSPTSGIPSQ. N-linked (GlcNAc...) asparagine glycosylation is found at Asn-159, Asn-239, and Asn-259. The beta-sandwich subdomain stretch occupies residues 191-430; it reads QDIFQPIAKD…KGVIQVAKNP (240 aa). Residues 191 to 909 enclose the GH81 domain; it reads QDIFQPIAKD…AGEYSTYIAL (719 aa). The interval 431-524 is alpha/beta subdomain; the sequence is SAEEGEGIYD…GDSWTMVEGN (94 aa). The tract at residues 539–909 is (alpha/beta)6 barrel subdomain; sequence SSQVTLSEGA…AGEYSTYIAL (371 aa). Residue Asp-654 is part of the active site. The (1,3-beta-D-glucosyl)n site is built by His-658, Asp-727, Glu-729, and Glu-733. Catalysis depends on residues Glu-729 and Glu-733. A may provide specificity for triple-helical beta-glucan region spans residues 798–800; that stretch reads KID. Tyr-811 is a (1,3-beta-D-glucosyl)n binding site.

Belongs to the glycosyl hydrolase 81 family.

The protein localises to the secreted. The protein resides in the cell wall. It catalyses the reaction Hydrolysis of (1-&gt;3)-beta-D-glucosidic linkages in (1-&gt;3)-beta-D-glucans.. Its function is as follows. Cleaves internal linkages in 1,3-beta-glucan. Probably involved in cell separation after cytokinesis. In Arthroderma benhamiae (strain ATCC MYA-4681 / CBS 112371) (Trichophyton mentagrophytes), this protein is Glucan endo-1,3-beta-D-glucosidase ARB_01444.